Here is a 397-residue protein sequence, read N- to C-terminus: Tryptophan synthase beta chain (397 aa).

K87 is subject to N6-(pyridoxal phosphate)lysine.

This sequence belongs to the TrpB family. Tetramer of two alpha and two beta chains. The cofactor is pyridoxal 5'-phosphate.

It catalyses the reaction (1S,2R)-1-C-(indol-3-yl)glycerol 3-phosphate + L-serine = D-glyceraldehyde 3-phosphate + L-tryptophan + H2O. It participates in amino-acid biosynthesis; L-tryptophan biosynthesis; L-tryptophan from chorismate: step 5/5. The beta subunit is responsible for the synthesis of L-tryptophan from indole and L-serine. The sequence is that of Tryptophan synthase beta chain from Salmonella agona (strain SL483).